Consider the following 470-residue polypeptide: O-acyltransferase pboC (470 aa).

Catalysis depends on proton acceptor residues His149 and Asp386.

Belongs to the plant acyltransferase family. Monomer.

Its pathway is secondary metabolite biosynthesis. Its function is as follows. O-acetyltransferase; part of the gene cluster that mediates the biosynthesis of protubonine B, a hydroxylated and diacetylated cyclo-L-Trp-L-Leu derivative. Within the pathway, pboC catalyzes the acetylation of protubonine D at the hydroxy group to produce protubonine C. The first step of the protubonine B synthesis is performed by the nonribosomal peptide synthetase pboA that catalyzes the formation of cyclo-L-Trp-L-Leu by condensing L-Leu with L-Trp. The flavin-dependent monooxygenase pboD is responsible for hydroxylation at C-3 of the indole ring and subsequent formation of the pyrrolidine ring, leadind to protubonine D. Protubonine D is further diacetylated by two acetyltransferases, pboB and pboC, to form the final product protubonine B via protubonine C. This Aspergillus ustus protein is O-acyltransferase pboC.